The primary structure comprises 429 residues: Glutamate-1-semialdehyde 2,1-aminomutase 1 (429 aa).

An N6-(pyridoxal phosphate)lysine modification is found at Lys268.

The protein belongs to the class-III pyridoxal-phosphate-dependent aminotransferase family. HemL subfamily. As to quaternary structure, homodimer. It depends on pyridoxal 5'-phosphate as a cofactor.

The protein localises to the cytoplasm. The enzyme catalyses (S)-4-amino-5-oxopentanoate = 5-aminolevulinate. It functions in the pathway porphyrin-containing compound metabolism; protoporphyrin-IX biosynthesis; 5-aminolevulinate from L-glutamyl-tRNA(Glu): step 2/2. The protein is Glutamate-1-semialdehyde 2,1-aminomutase 1 of Staphylococcus haemolyticus (strain JCSC1435).